Here is a 400-residue protein sequence, read N- to C-terminus: Enoyl-[acyl-carrier-protein] reductase [NADH] (400 aa).

NAD(+) contacts are provided by residues 48–53 (GSSSGY), 74–75 (FE), 111–112 (DA), and 139–140 (LA). Tyrosine 225 contributes to the substrate binding site. Catalysis depends on tyrosine 235, which acts as the Proton donor. NAD(+) contacts are provided by residues lysine 244 and 273–275 (VVT).

This sequence belongs to the TER reductase family. As to quaternary structure, monomer.

The enzyme catalyses a 2,3-saturated acyl-[ACP] + NAD(+) = a (2E)-enoyl-[ACP] + NADH + H(+). It functions in the pathway lipid metabolism; fatty acid biosynthesis. Involved in the final reduction of the elongation cycle of fatty acid synthesis (FAS II). Catalyzes the reduction of a carbon-carbon double bond in an enoyl moiety that is covalently linked to an acyl carrier protein (ACP). The chain is Enoyl-[acyl-carrier-protein] reductase [NADH] from Shewanella pealeana (strain ATCC 700345 / ANG-SQ1).